The following is a 155-amino-acid chain: Cyanate hydratase (155 aa).

Residues arginine 95, glutamate 98, and serine 121 contribute to the active site.

Belongs to the cyanase family.

It catalyses the reaction cyanate + hydrogencarbonate + 3 H(+) = NH4(+) + 2 CO2. Its function is as follows. Catalyzes the reaction of cyanate with bicarbonate to produce ammonia and carbon dioxide. The sequence is that of Cyanate hydratase from Pseudomonas syringae pv. syringae (strain B728a).